A 433-amino-acid polypeptide reads, in one-letter code: 3-phosphoshikimate 1-carboxyvinyltransferase (433 aa).

3 residues coordinate 3-phosphoshikimate: Lys22, Ser23, and Arg27. A phosphoenolpyruvate-binding site is contributed by Lys22. Phosphoenolpyruvate-binding residues include Gly94 and Arg122. 3-phosphoshikimate is bound by residues Ser168, Ser169, Gln170, Ser196, Asp319, and Lys346. Residue Gln170 participates in phosphoenolpyruvate binding. Catalysis depends on Asp319, which acts as the Proton acceptor. The phosphoenolpyruvate site is built by Arg350, Arg394, and Lys418.

The protein belongs to the EPSP synthase family. In terms of assembly, monomer.

It localises to the cytoplasm. The enzyme catalyses 3-phosphoshikimate + phosphoenolpyruvate = 5-O-(1-carboxyvinyl)-3-phosphoshikimate + phosphate. Its pathway is metabolic intermediate biosynthesis; chorismate biosynthesis; chorismate from D-erythrose 4-phosphate and phosphoenolpyruvate: step 6/7. Catalyzes the transfer of the enolpyruvyl moiety of phosphoenolpyruvate (PEP) to the 5-hydroxyl of shikimate-3-phosphate (S3P) to produce enolpyruvyl shikimate-3-phosphate and inorganic phosphate. The polypeptide is 3-phosphoshikimate 1-carboxyvinyltransferase (Nitrosomonas eutropha (strain DSM 101675 / C91 / Nm57)).